A 485-amino-acid chain; its full sequence is Glutamyl-tRNA(Gln) amidotransferase subunit A (485 aa).

Catalysis depends on charge relay system residues Lys78 and Ser153. The Acyl-ester intermediate role is filled by Ser177.

It belongs to the amidase family. GatA subfamily. As to quaternary structure, heterotrimer of A, B and C subunits.

It carries out the reaction L-glutamyl-tRNA(Gln) + L-glutamine + ATP + H2O = L-glutaminyl-tRNA(Gln) + L-glutamate + ADP + phosphate + H(+). In terms of biological role, allows the formation of correctly charged Gln-tRNA(Gln) through the transamidation of misacylated Glu-tRNA(Gln) in organisms which lack glutaminyl-tRNA synthetase. The reaction takes place in the presence of glutamine and ATP through an activated gamma-phospho-Glu-tRNA(Gln). In Geobacter sulfurreducens (strain ATCC 51573 / DSM 12127 / PCA), this protein is Glutamyl-tRNA(Gln) amidotransferase subunit A.